We begin with the raw amino-acid sequence, 687 residues long: Mitochondrial 15S rRNA processing factor ppr3 (687 aa).

The N-terminal 49 residues, 1–49 (MLNKCSGSLTLLAVRRFCGPCRRLHYHKDNPNNINIAKNLLNNNIQARC), are a transit peptide targeting the mitochondrion. PPR repeat units follow at residues 262–296 (NGLVYQSYAIALSSLGKHKDLVALYSEQKSVSITP), 297–331 (SKDFLNACIKAFSRTKEFTKAWEVFNFMKFTATSI), 334–368 (SAETYGLMIQICSSQYNPEKALDLYNEMKLRPIDP), and 372–407 (TTFVINNLIHALATDVRFQTVAFSLLQDLSHYGLRP).

The protein belongs to the CCM1 family. As to quaternary structure, binds to mitochondrial small subunit 15S rRNA.

The protein resides in the mitochondrion. Functionally, regulates mitochondrial small subunit maturation by controlling 15S rRNA 5'-end processing. Localizes to the 5' precursor of the 15S rRNA in a position that is subsequently occupied by mS47 in the mature yeast mtSSU. Uses structure and sequence-specific RNA recognition, binding to a single-stranded region of the precursor and specifically recognizing bases -6 to -1. The exchange of Ccm1 for mS47 is coupled to the irreversible removal of precursor rRNA that is accompanied by conformational changes of the mitoribosomal proteins uS5m and mS26. These conformational changes signal completion of 5'-end rRNA processing through protection of the mature 5'-end of the 15S rRNA and stabilization of mS47. The removal of the 5' precursor together with the dissociation of Ccm1 may be catalyzed by the 5'-3' exoribonuclease Pet127. Involved in the specific removal of group I introns in mitochondrial encoded transcripts. This Schizosaccharomyces pombe (strain 972 / ATCC 24843) (Fission yeast) protein is Mitochondrial 15S rRNA processing factor ppr3.